Consider the following 132-residue polypeptide: Nuclear transition protein 2 (132 aa).

The segment covering 1–20 (MDTKTQSLPNTHAQPHSNSR) has biased composition (polar residues). Residues 1-132 (MDTKTQSLPN…KRQSSGRKYN (132 aa)) form a disordered region. Zn(2+) is bound by residues H12, H16, H24, C29, C31, and C35. The segment covering 37–59 (SRSRSRSCRSRSSSRRPRSHRSP) has biased composition (basic residues). Positions 82–94 (SHQCPSRPVTHSC) are enriched in polar residues. Residues 105–113 (GKVIKRKQV) carry the Nuclear localization signal motif. The segment covering 108 to 132 (IKRKQVKRSKQVYKRKRQSSGRKYN) has biased composition (basic residues). S127 is subject to Phosphoserine.

The protein belongs to the nuclear transition protein 2 family. As to expression, testis.

It is found in the nucleus. It localises to the nucleolus. The protein resides in the chromosome. Plays a key role in the replacement of histones to protamine in the elongating spermatids of mammals. In condensing spermatids, loaded onto the nucleosomes, where it promotes the recruitment and processing of protamines, which are responsible for histone eviction. This is Nuclear transition protein 2 (TNP2) from Bos taurus (Bovine).